Reading from the N-terminus, the 121-residue chain is Dihydroneopterin aldolase (121 aa).

Residues glutamate 16 and methionine 111 each coordinate substrate.

The protein belongs to the archaeal dihydroneopterin aldolase family. As to quaternary structure, homotetramer.

The enzyme catalyses 7,8-dihydroneopterin = 6-hydroxymethyl-7,8-dihydropterin + glycolaldehyde. The protein operates within cofactor biosynthesis; 5,6,7,8-tetrahydromethanopterin biosynthesis. In terms of biological role, catalyzes the conversion of 7,8-dihydroneopterin (H2Neo) to 6-hydroxymethyl-7,8-dihydropterin (6-HMD). This chain is Dihydroneopterin aldolase, found in Methanopyrus kandleri (strain AV19 / DSM 6324 / JCM 9639 / NBRC 100938).